The following is a 462-amino-acid chain: Argininosuccinate lyase (462 aa).

The protein belongs to the lyase 1 family. Argininosuccinate lyase subfamily.

Its subcellular location is the cytoplasm. It catalyses the reaction 2-(N(omega)-L-arginino)succinate = fumarate + L-arginine. It functions in the pathway amino-acid biosynthesis; L-arginine biosynthesis; L-arginine from L-ornithine and carbamoyl phosphate: step 3/3. The chain is Argininosuccinate lyase from Bacillus anthracis (strain A0248).